A 343-amino-acid chain; its full sequence is Phenylalanine--tRNA ligase alpha subunit (343 aa).

Position 264 (Glu264) interacts with Mg(2+).

This sequence belongs to the class-II aminoacyl-tRNA synthetase family. Phe-tRNA synthetase alpha subunit type 1 subfamily. As to quaternary structure, tetramer of two alpha and two beta subunits. It depends on Mg(2+) as a cofactor.

It is found in the cytoplasm. The enzyme catalyses tRNA(Phe) + L-phenylalanine + ATP = L-phenylalanyl-tRNA(Phe) + AMP + diphosphate + H(+). This is Phenylalanine--tRNA ligase alpha subunit from Azoarcus sp. (strain BH72).